The chain runs to 264 residues: Alkaline ceramidase 1 (264 aa).

Topologically, residues Met1–Glu27 are lumenal. Ca(2+) contacts are provided by Asp13, Trp14, Glu16, Asn18, and Glu27. The helical transmembrane segment at Phe28–Met48 threads the bilayer. Residues His49–Arg57 lie on the Cytoplasmic side of the membrane. Residues Tyr58–Met78 traverse the membrane as a helical segment. His77 contacts Zn(2+). At Thr79 to Ser81 the chain is on the lumenal side. A helical membrane pass occupies residues Phe82–Ile102. Topologically, residues Trp103–Gln119 are cytoplasmic. A helical transmembrane segment spans residues Phe120–Leu137. A topological domain (lumenal) is located at residue Arg138. Residues Pro139–Gln159 form a helical membrane-spanning segment. Over Glu160–Ser176 the chain is Cytoplasmic. Residues Val177–Trp197 traverse the membrane as a helical segment. Over Gln198 to His206 the chain is Lumenal. Zn(2+)-binding residues include His206 and His210. A helical transmembrane segment spans residues Ser207–Val227. Residues Asp228–Cys264 lie on the Cytoplasmic side of the membrane.

Belongs to the alkaline ceramidase family. It depends on Zn(2+) as a cofactor. As to expression, mainly expressed in epidermis.

The protein localises to the endoplasmic reticulum membrane. The catalysed reaction is an N-acylsphing-4-enine + H2O = sphing-4-enine + a fatty acid. It catalyses the reaction N-tetracosanoyl-sphing-4-enine + H2O = tetracosanoate + sphing-4-enine. It carries out the reaction an N-acylsphinganine + H2O = sphinganine + a fatty acid. The enzyme catalyses N-(9Z-octadecenoyl)-sphing-4-enine + H2O = sphing-4-enine + (9Z)-octadecenoate. The catalysed reaction is N-(15Z-tetracosenoyl)-sphing-4-enine + H2O = (15Z)-tetracosenoate + sphing-4-enine. The protein operates within lipid metabolism; sphingolipid metabolism. With respect to regulation, inhibited by sphingosine. Activity is Ca(2+)-dependent. Its function is as follows. Endoplasmic reticulum ceramidase that catalyzes the hydrolysis of ceramides into sphingosine and free fatty acids at alkaline pH. Ceramides, sphingosine, and its phosphorylated form sphingosine-1-phosphate are bioactive lipids that mediate cellular signaling pathways regulating several biological processes including cell proliferation, apoptosis and differentiation. Exhibits a strong substrate specificity towards the natural stereoisomer of ceramides with D-erythro-sphingosine as a backbone and has a higher activity towards very long-chain unsaturated fatty acids like the C24:1-ceramide. May also hydrolyze dihydroceramides to produce dihydrosphingosine. ACER1 is a skin-specific ceramidase that regulates the levels of ceramides, sphingosine and sphingosine-1-phosphate in the epidermis, mediates the calcium-induced differentiation of epidermal keratinocytes and more generally plays an important role in skin homeostasis. In Homo sapiens (Human), this protein is Alkaline ceramidase 1.